Reading from the N-terminus, the 461-residue chain is Toxin CfTX-B (461 aa).

A signal peptide spans 1 to 24 (MDPRISSRLRALALLVFVISITDG). A propeptide spanning residues 25 to 31 (IPNRAKR) is cleaved from the precursor.

It belongs to the jellyfish toxin family. Type II subfamily. As to quaternary structure, oligomer. In terms of processing, contains 2 disulfide bonds. Nematocytes.

The protein resides in the secreted. The protein localises to the nematocyst. It localises to the target cell membrane. The fraction containing this toxin and CfTX-B shows potent hemolytic activity. This fraction causes minor effects on the cardiovascular system of anesthetized rats (at 25 ug/kg), since it has no significant effects on heart rate but produces relatively small increases in mean arterial pressure. This is Toxin CfTX-B from Chironex fleckeri (Australian box jellyfish).